Reading from the N-terminus, the 954-residue chain is Glycine dehydrogenase (decarboxylating) (954 aa).

Lysine 706 is modified (N6-(pyridoxal phosphate)lysine).

The protein belongs to the GcvP family. In terms of assembly, the glycine cleavage system is composed of four proteins: P, T, L and H. It depends on pyridoxal 5'-phosphate as a cofactor.

It carries out the reaction N(6)-[(R)-lipoyl]-L-lysyl-[glycine-cleavage complex H protein] + glycine + H(+) = N(6)-[(R)-S(8)-aminomethyldihydrolipoyl]-L-lysyl-[glycine-cleavage complex H protein] + CO2. Functionally, the glycine cleavage system catalyzes the degradation of glycine. The P protein binds the alpha-amino group of glycine through its pyridoxal phosphate cofactor; CO(2) is released and the remaining methylamine moiety is then transferred to the lipoamide cofactor of the H protein. The polypeptide is Glycine dehydrogenase (decarboxylating) (Pseudomonas savastanoi pv. phaseolicola (strain 1448A / Race 6) (Pseudomonas syringae pv. phaseolicola (strain 1448A / Race 6))).